Here is a 428-residue protein sequence, read N- to C-terminus: Serine--tRNA ligase (428 aa).

Residue 235-237 (TAE) coordinates L-serine. 266–268 (RSE) contributes to the ATP binding site. Glu289 lines the L-serine pocket. 353 to 356 (EISS) is an ATP binding site. Ser389 serves as a coordination point for L-serine.

The protein belongs to the class-II aminoacyl-tRNA synthetase family. Type-1 seryl-tRNA synthetase subfamily. As to quaternary structure, homodimer. The tRNA molecule binds across the dimer.

It localises to the cytoplasm. The enzyme catalyses tRNA(Ser) + L-serine + ATP = L-seryl-tRNA(Ser) + AMP + diphosphate + H(+). It catalyses the reaction tRNA(Sec) + L-serine + ATP = L-seryl-tRNA(Sec) + AMP + diphosphate + H(+). It functions in the pathway aminoacyl-tRNA biosynthesis; selenocysteinyl-tRNA(Sec) biosynthesis; L-seryl-tRNA(Sec) from L-serine and tRNA(Sec): step 1/1. Its function is as follows. Catalyzes the attachment of serine to tRNA(Ser). Is also able to aminoacylate tRNA(Sec) with serine, to form the misacylated tRNA L-seryl-tRNA(Sec), which will be further converted into selenocysteinyl-tRNA(Sec). In Shewanella baltica (strain OS223), this protein is Serine--tRNA ligase.